A 374-amino-acid polypeptide reads, in one-letter code: Tuliposide A-converting enzyme b1, amyloplastic (374 aa).

An amyloplast-targeting transit peptide spans 1–68 (MSVALFCGPP…TNSSLSPSPT (68 aa)). Ser226 functions as the Acyl-ester intermediate in the catalytic mechanism. Residues Asp316 and His348 each act as charge relay system in the active site.

Belongs to the AB hydrolase superfamily. As to quaternary structure, homodimer. As to expression, highly expressed in pistil and bulb scales. Lower expression in stem, and barely detected in root, leaf, petal and stamen.

Its subcellular location is the plastid. The protein localises to the amyloplast. The enzyme catalyses 6-tuliposide A = tulipalin A + D-glucose. Lactone-forming carboxylesterases, specifically catalyzing intramolecular transesterification, but not hydrolysis. Involved in the biosynthesis of tulipalins, defensive chemicals that show antimicrobial activities against a broad range of strains of bacteria and fungi. Substrates are 6-tuliposide A &gt; 6-tuliposide B. This Tulipa gesneriana (Garden tulip) protein is Tuliposide A-converting enzyme b1, amyloplastic (TCEA-B1).